Reading from the N-terminus, the 310-residue chain is 4-hydroxyproline 2-epimerase (310 aa).

Residue cysteine 88 is the Proton acceptor of the active site. Residues 89–90 (GH), histidine 208, and aspartate 232 contribute to the substrate site. Cysteine 236 acts as the Proton donor in catalysis. 237–238 (GT) lines the substrate pocket.

The protein belongs to the proline racemase family.

The enzyme catalyses trans-4-hydroxy-L-proline = cis-4-hydroxy-D-proline. Functionally, catalyzes the epimerization of trans-4-hydroxy-L-proline (t4LHyp) to cis-4-hydroxy-D-proline (c4DHyp). Is likely involved in a degradation pathway that converts t4LHyp to alpha-ketoglutarate. Displays no proline racemase activity. In Burkholderia cenocepacia (strain ATCC BAA-245 / DSM 16553 / LMG 16656 / NCTC 13227 / J2315 / CF5610) (Burkholderia cepacia (strain J2315)), this protein is 4-hydroxyproline 2-epimerase.